The primary structure comprises 207 residues: Urease accessory protein UreG (207 aa).

14–21 (GPVGSGKT) is a binding site for GTP.

It belongs to the SIMIBI class G3E GTPase family. UreG subfamily. As to quaternary structure, homodimer. UreD, UreF and UreG form a complex that acts as a GTP-hydrolysis-dependent molecular chaperone, activating the urease apoprotein by helping to assemble the nickel containing metallocenter of UreC. The UreE protein probably delivers the nickel.

The protein resides in the cytoplasm. Facilitates the functional incorporation of the urease nickel metallocenter. This process requires GTP hydrolysis, probably effectuated by UreG. The protein is Urease accessory protein UreG of Pseudomonas entomophila (strain L48).